A 271-amino-acid polypeptide reads, in one-letter code: ATP synthase subunit a (271 aa).

Transmembrane regions (helical) follow at residues 40-60, 100-120, 146-166, 220-240, and 242-262; these read TINI…LVLF, LIAP…LMDL, DVNV…FYNI, LIFI…LNVP, and AIFH…LTIV.

It belongs to the ATPase A chain family. In terms of assembly, F-type ATPases have 2 components, CF(1) - the catalytic core - and CF(0) - the membrane proton channel. CF(1) has five subunits: alpha(3), beta(3), gamma(1), delta(1), epsilon(1). CF(0) has three main subunits: a(1), b(2) and c(9-12). The alpha and beta chains form an alternating ring which encloses part of the gamma chain. CF(1) is attached to CF(0) by a central stalk formed by the gamma and epsilon chains, while a peripheral stalk is formed by the delta and b chains.

The protein resides in the cell inner membrane. In terms of biological role, key component of the proton channel; it plays a direct role in the translocation of protons across the membrane. This chain is ATP synthase subunit a, found in Shigella flexneri.